A 307-amino-acid chain; its full sequence is Transmembrane and coiled-coil domain-containing protein 5B (307 aa).

Residues 20-212 adopt a coiled-coil conformation; sequence TLEAIKQNLK…SKAQNDSSQV (193 aa). Residues 246-268 form a helical membrane-spanning segment; sequence YLFFMVMIVIRLLGYVFFHLQYV.

This sequence belongs to the TMCO5 family.

Its subcellular location is the membrane. The chain is Transmembrane and coiled-coil domain-containing protein 5B (Tmco5b) from Mus musculus (Mouse).